Consider the following 255-residue polypeptide: Triosephosphate isomerase (255 aa).

Substrate is bound at residue 10–12 (NWK). His96 functions as the Electrophile in the catalytic mechanism. Catalysis depends on Glu168, which acts as the Proton acceptor. Substrate contacts are provided by residues Gly174, Ser213, and 234–235 (GG).

It belongs to the triosephosphate isomerase family. In terms of assembly, homodimer.

It is found in the cytoplasm. The catalysed reaction is D-glyceraldehyde 3-phosphate = dihydroxyacetone phosphate. It participates in carbohydrate biosynthesis; gluconeogenesis. The protein operates within carbohydrate degradation; glycolysis; D-glyceraldehyde 3-phosphate from glycerone phosphate: step 1/1. Its function is as follows. Involved in the gluconeogenesis. Catalyzes stereospecifically the conversion of dihydroxyacetone phosphate (DHAP) to D-glyceraldehyde-3-phosphate (G3P). The sequence is that of Triosephosphate isomerase from Histophilus somni (strain 129Pt) (Haemophilus somnus).